A 1446-amino-acid polypeptide reads, in one-letter code: DNA-directed RNA polymerase subunit beta'' (1446 aa).

Residues Cys-217, Cys-285, Cys-292, and Cys-295 each coordinate Zn(2+).

This sequence belongs to the RNA polymerase beta' chain family. RpoC2 subfamily. In terms of assembly, in plastids the minimal PEP RNA polymerase catalytic core is composed of four subunits: alpha, beta, beta', and beta''. When a (nuclear-encoded) sigma factor is associated with the core the holoenzyme is formed, which can initiate transcription. The cofactor is Zn(2+).

Its subcellular location is the plastid. The protein localises to the chloroplast. The enzyme catalyses RNA(n) + a ribonucleoside 5'-triphosphate = RNA(n+1) + diphosphate. DNA-dependent RNA polymerase catalyzes the transcription of DNA into RNA using the four ribonucleoside triphosphates as substrates. This is DNA-directed RNA polymerase subunit beta'' from Thalassiosira pseudonana (Marine diatom).